The sequence spans 208 residues: Ribosomal RNA small subunit methyltransferase G (208 aa).

S-adenosyl-L-methionine-binding positions include Gly-75, Leu-80, 126-127 (VE), and Arg-141.

It belongs to the methyltransferase superfamily. RNA methyltransferase RsmG family.

The protein localises to the cytoplasm. The enzyme catalyses guanosine(527) in 16S rRNA + S-adenosyl-L-methionine = N(7)-methylguanosine(527) in 16S rRNA + S-adenosyl-L-homocysteine. Its function is as follows. Specifically methylates the N7 position of guanine in position 527 of 16S rRNA. This Marinomonas sp. (strain MWYL1) protein is Ribosomal RNA small subunit methyltransferase G.